The sequence spans 237 residues: 1-(5-phosphoribosyl)-5-[(5-phosphoribosylamino)methylideneamino] imidazole-4-carboxamide isomerase (237 aa).

Aspartate 8 functions as the Proton acceptor in the catalytic mechanism. Aspartate 129 functions as the Proton donor in the catalytic mechanism.

Belongs to the HisA/HisF family.

The protein resides in the cytoplasm. The enzyme catalyses 1-(5-phospho-beta-D-ribosyl)-5-[(5-phospho-beta-D-ribosylamino)methylideneamino]imidazole-4-carboxamide = 5-[(5-phospho-1-deoxy-D-ribulos-1-ylimino)methylamino]-1-(5-phospho-beta-D-ribosyl)imidazole-4-carboxamide. The protein operates within amino-acid biosynthesis; L-histidine biosynthesis; L-histidine from 5-phospho-alpha-D-ribose 1-diphosphate: step 4/9. The protein is 1-(5-phosphoribosyl)-5-[(5-phosphoribosylamino)methylideneamino] imidazole-4-carboxamide isomerase of Roseiflexus sp. (strain RS-1).